A 651-amino-acid chain; its full sequence is Beta-glucuronidase (651 aa).

The signal sequence occupies residues M1–G22. N173, N190, N272, and N420 each carry an N-linked (GlcNAc...) asparagine glycan. Residue E451 is the Proton donor of the active site. The N-linked (GlcNAc...) asparagine glycan is linked to N631.

Belongs to the glycosyl hydrolase 2 family. In terms of assembly, homotetramer.

The protein resides in the lysosome. It carries out the reaction a beta-D-glucuronoside + H2O = D-glucuronate + an alcohol. Inhibited by L-aspartic acid. Plays an important role in the degradation of dermatan and keratan sulfates. The chain is Beta-glucuronidase (GUSB) from Pongo abelii (Sumatran orangutan).